Reading from the N-terminus, the 312-residue chain is DNA primase small subunit PriS (312 aa).

Active-site residues include Asp-88, Asp-90, and Asp-215.

The protein belongs to the eukaryotic-type primase small subunit family. In terms of assembly, heterodimer of a small subunit (PriS) and a large subunit (PriL). The cofactor is Mg(2+). It depends on Mn(2+) as a cofactor.

In terms of biological role, catalytic subunit of DNA primase, an RNA polymerase that catalyzes the synthesis of short RNA molecules used as primers for DNA polymerase during DNA replication. The small subunit contains the primase catalytic core and has DNA synthesis activity on its own. Binding to the large subunit stabilizes and modulates the activity, increasing the rate of DNA synthesis while decreasing the length of the DNA fragments, and conferring RNA synthesis capability. The DNA polymerase activity may enable DNA primase to also catalyze primer extension after primer synthesis. May also play a role in DNA repair. This is DNA primase small subunit PriS from Pyrobaculum arsenaticum (strain DSM 13514 / JCM 11321 / PZ6).